A 318-amino-acid chain; its full sequence is NADH-ubiquinone oxidoreductase chain 1 (318 aa).

8 consecutive transmembrane segments (helical) span residues 2-22 (FMINILTLILPILLAVAFLTL), 70-90 (MFIIAPVLALTLALTMWSPLP), 100-120 (LGVLFMLAMSSLAVYSILWSG), 136-156 (VAQTISYEVTLAIILLSVLLM), 172-192 (LWLLFPSWPLAMMWFISTLAE), 222-242 (LFFLAEYANIIMMNMLTAILF), 253-273 (ELYTANLIIKTLLLTMSFLWI), and 294-314 (LPLTLALCMWHISLPIMTASI).

Belongs to the complex I subunit 1 family. As to quaternary structure, core subunit of respiratory chain NADH dehydrogenase (Complex I) which is composed of 45 different subunits.

The protein resides in the mitochondrion inner membrane. It catalyses the reaction a ubiquinone + NADH + 5 H(+)(in) = a ubiquinol + NAD(+) + 4 H(+)(out). Core subunit of the mitochondrial membrane respiratory chain NADH dehydrogenase (Complex I) which catalyzes electron transfer from NADH through the respiratory chain, using ubiquinone as an electron acceptor. Essential for the catalytic activity and assembly of complex I. The protein is NADH-ubiquinone oxidoreductase chain 1 (MT-ND1) of Balaenoptera physalus (Fin whale).